A 1054-amino-acid chain; its full sequence is DIS3-like exonuclease 1 (1054 aa).

One can recognise a CSD1 domain in the interval 236 to 313; the sequence is AGIKSGRYIQ…WKGRTAALCE (78 aa). The tract at residues 313 to 332 is disordered; it reads ENDSEDKASGESPSEPMPTG. The 67-residue stretch at 365–431 folds into the CSD2 domain; that stretch reads ILVTPWDYRI…GEIATILVEN (67 aa). One can recognise an RNB domain in the interval 465–816; the sequence is RRDLRSTHLV…VHRLLMAAIS (352 aa). Serine 989 carries the phosphoserine modification.

It belongs to the RNR ribonuclease family. As to quaternary structure, component of the RNA exosome complex. The catalytically inactive RNA exosome core (Exo-9) complex is believed to associate with catalytic subunits EXOSC10, and DIS3 or DIS3L in cytoplasmic- and nuclear-specific RNA exosome complex forms. The cofactor is Mg(2+).

Its subcellular location is the cytoplasm. It carries out the reaction Exonucleolytic cleavage in the 3'- to 5'-direction to yield nucleoside 5'-phosphates.. Functionally, catalytic component of the RNA exosome complex which has 3'-&gt;5' exoribonuclease activity and participates in a multitude of cellular RNA processing and degradation events. In the cytoplasm, the RNA exosome complex is involved in general mRNA turnover and specifically degrades inherently unstable mRNAs containing AU-rich elements (AREs) within their 3' untranslated regions, and in RNA surveillance pathways, preventing translation of aberrant mRNAs. It seems to be involved in degradation of histone mRNA. This is DIS3-like exonuclease 1 (Dis3l) from Rattus norvegicus (Rat).